Reading from the N-terminus, the 601-residue chain is 3-hydroxy-3-methylglutaryl-coenzyme A reductase (601 aa).

A disordered region spans residues 1-34 (MDSRRRSPTVTAKAAAGELPLAPHEGQNQQPSIP). Transmembrane regions (helical) follow at residues 36–58 (SSDVLPLPLYLANGVFFTLFFSV) and 86–106 (ALASLIASVIYLVSFFGLDFV). Residues 107 to 179 (QSLIYKPNNE…PLITPQNSEE (73 aa)) form a linker region. A catalytic region spans residues 180-601 (DEDIIKAVVA…IASSQLESDS (422 aa)). Residue Glu-273 is the Charge relay system of the active site. Asn-337 carries N-linked (GlcNAc...) asparagine glycosylation. Active-site charge relay system residues include Lys-405 and Asp-481. Catalysis depends on His-579, which acts as the Proton donor. N-linked (GlcNAc...) asparagine glycosylation occurs at Asn-583.

This sequence belongs to the HMG-CoA reductase family.

The protein resides in the endoplasmic reticulum membrane. It carries out the reaction (R)-mevalonate + 2 NADP(+) + CoA = (3S)-3-hydroxy-3-methylglutaryl-CoA + 2 NADPH + 2 H(+). Its pathway is metabolic intermediate biosynthesis; (R)-mevalonate biosynthesis; (R)-mevalonate from acetyl-CoA: step 3/3. Its function is as follows. Catalyzes the synthesis of mevalonate. The specific precursor of all isoprenoid compounds present in plants. This chain is 3-hydroxy-3-methylglutaryl-coenzyme A reductase (HMGR), found in Catharanthus roseus (Madagascar periwinkle).